The primary structure comprises 186 residues: Ribosome-recycling factor (186 aa).

The protein belongs to the RRF family.

It localises to the cytoplasm. Responsible for the release of ribosomes from messenger RNA at the termination of protein biosynthesis. May increase the efficiency of translation by recycling ribosomes from one round of translation to another. The chain is Ribosome-recycling factor from Allorhizobium ampelinum (strain ATCC BAA-846 / DSM 112012 / S4) (Agrobacterium vitis (strain S4)).